The chain runs to 271 residues: uncharacterized protein (271 aa).

The protein belongs to the anhydro-N-acetylmuramic acid kinase family.

This is an uncharacterized protein from Yersinia enterocolitica.